We begin with the raw amino-acid sequence, 110 residues long: Integration host factor subunit alpha (110 aa).

The protein belongs to the bacterial histone-like protein family. As to quaternary structure, heterodimer of an alpha and a beta chain.

Its function is as follows. This protein is one of the two subunits of integration host factor, a specific DNA-binding protein that functions in genetic recombination as well as in transcriptional and translational control. The sequence is that of Integration host factor subunit alpha from Nitrobacter hamburgensis (strain DSM 10229 / NCIMB 13809 / X14).